The following is an 826-amino-acid chain: Arf-GAP with ANK repeat and PH domain-containing protein cnt-1 (826 aa).

The 99-residue stretch at 275 to 373 (DVMMEGYLYK…WMRALQRTIL (99 aa)) folds into the PH domain. The Arf-GAP domain occupies 447 to 572 (TTAFEQVRRV…RFAVAEDTRA (126 aa)). The C4-type zinc finger occupies 462-485 (CADCGSPAPKWVSINLGVVLCIEC). The disordered stretch occupies residues 570 to 604 (TRARSSATNRQEHLKHKTSIGGNSSSNGVNRSSSY). Low complexity predominate over residues 588–603 (SIGGNSSSNGVNRSSS). ANK repeat units follow at residues 690-719 (NGTTALHIATRNGQTAAVEFLLLNGAKINM), 723-752 (KLNTPLHLAAKEGHTLPVCQLLKRGADSNL), and 756-789 (DSKTPLDIAMECTHADIVTLFRVTIMRNDFNADF).

In terms of assembly, interacts (via C-terminal ankyrin repeat) with rab-10 (GTP-bound form); the interaction is required for cnt-1 recruitment to endosomes. Interacts (via C-terminal ankyrin repeat) with rab-8 (GTP-bound form) and rab-35 (GTP-bound form). Post-translationally, cleaved by caspase ced-3 after Asp-382 and Asp-609. Cleavage at Asp-382 is required for subsequent cleavage at Asp-609.

It is found in the cytoplasm. It localises to the recycling endosome membrane. Its subcellular location is the basolateral cell membrane. The protein localises to the apical cell membrane. The protein resides in the cell membrane. In terms of biological role, GTPase-activating protein for the ADP ribosylation factor family. Regulates endosome recycling downstream of rab-10 and upstream of arf-6. Functionally, promotes apoptosis during embryonic development. Produced by caspase ced-3-mediated cleavage, and translocates to the plasma membrane where it prevents the activation of the prosurvival Akt-1/2 and sgk-1 signaling pathway by competing with Akt-1/2 for the binding to PtdIns(3,4,5)P3. The chain is Arf-GAP with ANK repeat and PH domain-containing protein cnt-1 from Caenorhabditis elegans.